A 140-amino-acid chain; its full sequence is MSRPAIIDNEKISKWRSYVESHVITYDNYMKIFRGESKVVGDRLEHCLFMDYGFKFVYSIEEAPSPDFKKLHTIKRLSGSVDNGNFPSLELIKIMLDKLGMKTLDKCQYRINKNDIVPNIEIIDLQHSRDLEIVNQEVKN.

This is an uncharacterized protein from Acanthamoeba polyphaga mimivirus (APMV).